Consider the following 345-residue polypeptide: Selenide, water dikinase (345 aa).

Residue Cys-16 is part of the active site. Residues Lys-19 and 46–48 (TSD) each bind ATP. A Mg(2+)-binding site is contributed by Asp-49. Residues Asp-66, Asp-89, and 136–138 (GHT) contribute to the ATP site. Asp-89 contacts Mg(2+). Residue Asp-224 participates in Mg(2+) binding.

Belongs to the selenophosphate synthase 1 family. Class I subfamily. As to quaternary structure, homodimer. It depends on Mg(2+) as a cofactor.

The enzyme catalyses hydrogenselenide + ATP + H2O = selenophosphate + AMP + phosphate + 2 H(+). Functionally, synthesizes selenophosphate from selenide and ATP. The sequence is that of Selenide, water dikinase from Clostridium botulinum (strain Eklund 17B / Type B).